A 238-amino-acid chain; its full sequence is Purine nucleoside phosphorylase DeoD-type (238 aa).

Residue H5 coordinates a purine D-ribonucleoside. Residues G21, R25, R44, and 88–91 (RVGS) contribute to the phosphate site. A purine D-ribonucleoside is bound by residues 180–182 (EME) and 204–205 (SD). D205 functions as the Proton donor in the catalytic mechanism.

The protein belongs to the PNP/UDP phosphorylase family. In terms of assembly, homohexamer; trimer of homodimers.

It catalyses the reaction a purine D-ribonucleoside + phosphate = a purine nucleobase + alpha-D-ribose 1-phosphate. The enzyme catalyses a purine 2'-deoxy-D-ribonucleoside + phosphate = a purine nucleobase + 2-deoxy-alpha-D-ribose 1-phosphate. In terms of biological role, catalyzes the reversible phosphorolytic breakdown of the N-glycosidic bond in the beta-(deoxy)ribonucleoside molecules, with the formation of the corresponding free purine bases and pentose-1-phosphate. The polypeptide is Purine nucleoside phosphorylase DeoD-type (Proteus mirabilis (strain HI4320)).